The primary structure comprises 118 residues: Ribosome-binding factor A (118 aa).

This sequence belongs to the RbfA family. As to quaternary structure, monomer. Binds 30S ribosomal subunits, but not 50S ribosomal subunits or 70S ribosomes.

It is found in the cytoplasm. In terms of biological role, one of several proteins that assist in the late maturation steps of the functional core of the 30S ribosomal subunit. Associates with free 30S ribosomal subunits (but not with 30S subunits that are part of 70S ribosomes or polysomes). Required for efficient processing of 16S rRNA. May interact with the 5'-terminal helix region of 16S rRNA. This chain is Ribosome-binding factor A, found in Bacillus anthracis (strain A0248).